We begin with the raw amino-acid sequence, 193 residues long: Protein CURVATURE THYLAKOID 1D, chloroplastic (193 aa).

Residues 1-51 (MELCTRSTTIITHLPASFNGHGYLAGKSVDRISLPLQRNVASLVLQSRTLR) constitute a chloroplast transit peptide. The Stromal segment spans residues 52–117 (CSRKFPGETV…NDIKLDSDKT (66 aa)). Residues 118–138 (YSILLYGSGAIVALYLTSAIV) traverse the membrane as a helical segment. Residues 139 to 142 (SSLE) lie on the Lumenal side of the membrane. The helical transmembrane segment at 143–163 (AIPLFPKLMEVVGLGYTLWFT) threads the bilayer. At 164–193 (TRYLLFKRNREELKTKVSEIKKQVLGSDSE) the chain is on the stromal side.

This sequence belongs to the CURT family. In terms of assembly, homo- and heterodimers and trimers.

The protein localises to the plastid. Its subcellular location is the chloroplast thylakoid membrane. Functionally, determines thylakoid architecture by inducing membrane curvature. The sequence is that of Protein CURVATURE THYLAKOID 1D, chloroplastic (CURT1D) from Arabidopsis thaliana (Mouse-ear cress).